A 479-amino-acid chain; its full sequence is V-type ATP synthase beta chain (479 aa).

The interval 458–479 is disordered; sequence EGDSEREAPKMDSPHEEISEKS.

Belongs to the ATPase alpha/beta chains family.

Produces ATP from ADP in the presence of a proton gradient across the membrane. The V-type beta chain is a regulatory subunit. The chain is V-type ATP synthase beta chain from Nitrosococcus oceani (strain ATCC 19707 / BCRC 17464 / JCM 30415 / NCIMB 11848 / C-107).